Reading from the N-terminus, the 345-residue chain is MKVAIIGATGYGGIELIRLLEQHPYFSIASLHSFSQVGEFITNVYPHFRNVLVHTLQEIDAEKIEKEAEIVFLATPAGVSAELTPKLLAVGLKVIDLSGDFRMIDPSSYELWYKRPAAQEELLRKAVYGLSEWKRPEIQNANLIANPGCFATAALLAVAPLVRSGIIEEASIIIDAKSGVSGAGKTPTTMTHFPELYDNLHIYKVNQHQHVPEIEQMLTEWNRETKPITFSTHLIPISRGIMITLYAKVKEEMKIEQLQKLYEETYEYSAFVRVRSQGEFPSPKEVRGSNYCDIGIAYDERTERVTVVSVIDNMMKGAAGQAVQNANLLAGLEETTGLQHMPLYP.

Residue Cys-149 is part of the active site.

It belongs to the NAGSA dehydrogenase family. Type 1 subfamily.

It is found in the cytoplasm. It catalyses the reaction N-acetyl-L-glutamate 5-semialdehyde + phosphate + NADP(+) = N-acetyl-L-glutamyl 5-phosphate + NADPH + H(+). The protein operates within amino-acid biosynthesis; L-arginine biosynthesis; N(2)-acetyl-L-ornithine from L-glutamate: step 3/4. Its function is as follows. Catalyzes the NADPH-dependent reduction of N-acetyl-5-glutamyl phosphate to yield N-acetyl-L-glutamate 5-semialdehyde. The sequence is that of N-acetyl-gamma-glutamyl-phosphate reductase from Bacillus mycoides (strain KBAB4) (Bacillus weihenstephanensis).